Here is a 181-residue protein sequence, read N- to C-terminus: Epidermin decarboxylase (181 aa).

His-67 is an active-site residue.

This sequence belongs to the HFCD (homooligomeric flavin containing Cys decarboxylase) superfamily. In terms of assembly, homododecamer. FMN serves as cofactor.

Catalyzes the removal of two reducing equivalents (oxidative decarboxylation) from the cysteine residue of the C-terminal meso-lanthionine of epidermin to form a --C==C-- double bond. This Staphylococcus epidermidis protein is Epidermin decarboxylase (epiD).